The following is a 400-amino-acid chain: MIGVIGVKRNVDIAIREKLALYPKKHKKYVGELLNSFKEVVILNTCNRTEIYFNCTEEISEDEIFDKIFNVFNWNDDLKKYMFLSKEKRAVTHLMEVICGFHSRILGEDQILGQIKDAYKTAISDNSISSELQKMFEIAIACGKKFKTKCKMFEVPVSSVSISINSALLKGCRKFMVLGYGEIGKLAIKHLLSHKVECIYLIVRDKSKASDLEGEIVEILDFNEKNHVINEVDCIVSCTAAPHTVVRNEDIKTEGDIIHIYDLAVPRDVDKELSEKERVILKDIDEISKIDDKNKKIRKERMEEYKHIVEESIEEFLNWLKIREVSSKIRNIKIRENEICSERIKTFSNKGNGENAKLAERMIKSTADAYVNRAIELLKSEALKGSDSSCAEIIEKIFLT.

Substrate contacts are provided by residues 45 to 48, S103, 108 to 110, and Q114; these read TCNR and EDQ. The Nucleophile role is filled by C46. 179 to 184 provides a ligand contact to NADP(+); sequence GYGEIG.

The protein belongs to the glutamyl-tRNA reductase family. In terms of assembly, homodimer.

The catalysed reaction is (S)-4-amino-5-oxopentanoate + tRNA(Glu) + NADP(+) = L-glutamyl-tRNA(Glu) + NADPH + H(+). The protein operates within porphyrin-containing compound metabolism; protoporphyrin-IX biosynthesis; 5-aminolevulinate from L-glutamyl-tRNA(Glu): step 1/2. Catalyzes the NADPH-dependent reduction of glutamyl-tRNA(Glu) to glutamate 1-semialdehyde (GSA). The chain is Glutamyl-tRNA reductase from Clostridium perfringens (strain SM101 / Type A).